Consider the following 77-residue polypeptide: Acyl carrier protein (77 aa).

The Carrier domain occupies 2–77 (SNIEERVKKI…AAIDYVTANQ (76 aa)). Serine 37 is subject to O-(pantetheine 4'-phosphoryl)serine.

It belongs to the acyl carrier protein (ACP) family. 4'-phosphopantetheine is transferred from CoA to a specific serine of apo-ACP by AcpS. This modification is essential for activity because fatty acids are bound in thioester linkage to the sulfhydryl of the prosthetic group.

It localises to the cytoplasm. The protein operates within lipid metabolism; fatty acid biosynthesis. Its function is as follows. Carrier of the growing fatty acid chain in fatty acid biosynthesis. The chain is Acyl carrier protein from Colwellia psychrerythraea (strain 34H / ATCC BAA-681) (Vibrio psychroerythus).